Here is a 280-residue protein sequence, read N- to C-terminus: MKYFEFTFDTHPCTETVNDVLAAVLGEAGFESFVEREGGLTAYIQQSLYNEETLKTELANFPVPDTEISYTFAEAEDKDWNEEWEKNFFQPIVIGDRCVIHSTFHQDVPKAEYDILINPQMAFGTGHHETTSLIIGELLDSELTGKSLLDMGCGTSILAILARMRGAKPCTAIDIDEWCVRNSIENIELNGVTDIAVSQGDASALQGKGPFDVVIANINRNILLNDMKQYVACMHPGSELFMSGFYIDDIPAIRREAEKHGLTFVHHQEKNRWAAVKFVL.

T131, G152, D174, and N217 together coordinate S-adenosyl-L-methionine.

It belongs to the methyltransferase superfamily. PrmA family.

The protein resides in the cytoplasm. The enzyme catalyses L-lysyl-[protein] + 3 S-adenosyl-L-methionine = N(6),N(6),N(6)-trimethyl-L-lysyl-[protein] + 3 S-adenosyl-L-homocysteine + 3 H(+). Functionally, methylates ribosomal protein L11. This is Ribosomal protein L11 methyltransferase from Bacteroides fragilis (strain ATCC 25285 / DSM 2151 / CCUG 4856 / JCM 11019 / LMG 10263 / NCTC 9343 / Onslow / VPI 2553 / EN-2).